The primary structure comprises 192 residues: Peptidyl-tRNA hydrolase (192 aa).

Tyr-18 contributes to the tRNA binding site. His-23 functions as the Proton acceptor in the catalytic mechanism. 3 residues coordinate tRNA: Phe-69, Asn-71, and Asn-117.

It belongs to the PTH family. Monomer.

It localises to the cytoplasm. The catalysed reaction is an N-acyl-L-alpha-aminoacyl-tRNA + H2O = an N-acyl-L-amino acid + a tRNA + H(+). In terms of biological role, hydrolyzes ribosome-free peptidyl-tRNAs (with 1 or more amino acids incorporated), which drop off the ribosome during protein synthesis, or as a result of ribosome stalling. Its function is as follows. Catalyzes the release of premature peptidyl moieties from peptidyl-tRNA molecules trapped in stalled 50S ribosomal subunits, and thus maintains levels of free tRNAs and 50S ribosomes. This is Peptidyl-tRNA hydrolase from Neisseria meningitidis serogroup B (strain ATCC BAA-335 / MC58).